Reading from the N-terminus, the 80-residue chain is Cell division topological specificity factor (80 aa).

The protein belongs to the MinE family.

Prevents the cell division inhibition by proteins MinC and MinD at internal division sites while permitting inhibition at polar sites. This ensures cell division at the proper site by restricting the formation of a division septum at the midpoint of the long axis of the cell. The polypeptide is Cell division topological specificity factor (Wolinella succinogenes (strain ATCC 29543 / DSM 1740 / CCUG 13145 / JCM 31913 / LMG 7466 / NCTC 11488 / FDC 602W) (Vibrio succinogenes)).